Consider the following 1343-residue polypeptide: DNA-directed RNA polymerase subunit beta (1343 aa).

It belongs to the RNA polymerase beta chain family. As to quaternary structure, the RNAP catalytic core consists of 2 alpha, 1 beta, 1 beta' and 1 omega subunit. When a sigma factor is associated with the core the holoenzyme is formed, which can initiate transcription.

The enzyme catalyses RNA(n) + a ribonucleoside 5'-triphosphate = RNA(n+1) + diphosphate. DNA-dependent RNA polymerase catalyzes the transcription of DNA into RNA using the four ribonucleoside triphosphates as substrates. This Haemophilus influenzae (strain 86-028NP) protein is DNA-directed RNA polymerase subunit beta.